A 582-amino-acid chain; its full sequence is A-type ATP synthase subunit A 1 (582 aa).

231–238 (GPFGSGKT) is a binding site for ATP.

This sequence belongs to the ATPase alpha/beta chains family. As to quaternary structure, has multiple subunits with at least A(3), B(3), C, D, E, F, H, I and proteolipid K(x).

Its subcellular location is the cell membrane. The enzyme catalyses ATP + H2O + 4 H(+)(in) = ADP + phosphate + 5 H(+)(out). Component of the A-type ATP synthase that produces ATP from ADP in the presence of a proton gradient across the membrane. The A chain is the catalytic subunit. The protein is A-type ATP synthase subunit A 1 of Methanospirillum hungatei JF-1 (strain ATCC 27890 / DSM 864 / NBRC 100397 / JF-1).